Here is a 184-residue protein sequence, read N- to C-terminus: Leucine-rich repeat-containing protein 20 (184 aa).

LRR repeat units follow at residues 23-44 (GSDT…IYKV), 51-72 (QIHL…FMTT), 75-96 (QLRE…VSSL), 98-120 (HLRA…TTLP), 121-141 (ALET…EKLA), and 145-167 (ALRV…APPL). A Phosphoserine modification is found at S175.

This Mus musculus (Mouse) protein is Leucine-rich repeat-containing protein 20 (Lrrc20).